A 343-amino-acid polypeptide reads, in one-letter code: E3 ubiquitin-protein ligase RNF113A (343 aa).

Ala-2 is subject to N-acetylalanine. Residues 2-60 form an important for interaction with SNRNP200/BRR2 region; that stretch reads AEQLSPGKAVDQVCTFLFKKPGRKGAAGRRKRPACDPEPGESGSSSDEGCTVVRPEKKR. Ser-6 is modified (phosphoserine). Basic residues predominate over residues 22–33; it reads PGRKGAAGRRKR. Residues 22 to 96 are disordered; the sequence is PGRKGAAGRR…EEEENEPESL (75 aa). Residues 41–50 show a composition bias toward low complexity; sequence GESGSSSDEG. An important for interaction with CXCR4 region spans residues 50 to 61; sequence GCTVVRPEKKRV. Phosphoserine is present on residues Ser-84 and Ser-85. Residues 84–93 are compositionally biased toward acidic residues; that stretch reads SSEEEEENEP. Residues 196–224 form a C3H1-type zinc finger; sequence DYQPDICKDYKETGFCGFGDSCKFLHDRS. Phosphoserine is present on Ser-253. An RING-type zinc finger spans residues 262–300; the sequence is CFICRQSFQNPVVTKCRHYFCESCALQHFRTTPRCYVCD. The interval 322–343 is disordered; that stretch reads ATGEGGASDLPEDPDEDAIPIT. Residues 331 to 343 are compositionally biased toward acidic residues; sequence LPEDPDEDAIPIT.

Component of pre-catalytic and catalytic spliceosome complexes. Interacts (via N-terminus) with the spliceosome subunit SNRNP200/BRR2. Component of the minor spliceosome, which splices U12-type introns. Within this complex, interacts with SCNM1 and CRIPT. As to expression, ubiquitous.

The protein resides in the nucleus. Its subcellular location is the nucleus speckle. The catalysed reaction is S-ubiquitinyl-[E2 ubiquitin-conjugating enzyme]-L-cysteine + [acceptor protein]-L-lysine = [E2 ubiquitin-conjugating enzyme]-L-cysteine + N(6)-ubiquitinyl-[acceptor protein]-L-lysine.. Its pathway is protein modification; protein ubiquitination. Required for pre-mRNA splicing as component of the spliceosome. As a component of the minor spliceosome, involved in the splicing of U12-type introns in pre-mRNAs. E3 ubiquitin-protein ligase that catalyzes the transfer of ubiquitin onto target proteins. Catalyzes polyubiquitination of SNRNP200/BRR2 with non-canonical 'Lys-63'-linked polyubiquitin chains. Plays a role in DNA repair via its role in the synthesis of 'Lys-63'-linked polyubiquitin chains that recruit ALKBH3 and the ASCC complex to sites of DNA damage by alkylating agents. Ubiquitinates CXCR4, leading to its degradation, and thereby contributes to the termination of CXCR4 signaling. This chain is E3 ubiquitin-protein ligase RNF113A (RNF113A), found in Homo sapiens (Human).